The following is a 432-amino-acid chain: Short/branched chain specific acyl-CoA dehydrogenase, mitochondrial (432 aa).

Residues 1–33 constitute a mitochondrion transit peptide; sequence MEGLAVRLLRGSRLLRRNFLTCLSSWKIPPHVS. Residue K70 is modified to N6-acetyllysine; alternate. K70 carries the N6-succinyllysine; alternate modification. FAD is bound by residues 174–183 and 207–209; these read FCLSEAGAGS and WIS. Position 183 (S183) interacts with substrate. S183 is modified (phosphoserine). Y229 and Y283 together coordinate substrate. N6-acetyllysine; alternate is present on K284. Position 284 is an N6-succinyllysine; alternate (K284). 291 to 294 contributes to the substrate binding site; that stretch reads NEGR. FAD-binding positions include R319, Q330, and 387-391; that span reads EWMGG. The Proton acceptor role is filled by E414. Position 416-418 (416-418) interacts with FAD; that stretch reads ASN. K426 bears the N6-acetyllysine mark.

Belongs to the acyl-CoA dehydrogenase family. Homotetramer. It depends on FAD as a cofactor. As to expression, ubiquitously expressed.

Its subcellular location is the mitochondrion matrix. The enzyme catalyses 2-methylbutanoyl-CoA + oxidized [electron-transfer flavoprotein] + H(+) = (2E)-2-methylbut-2-enoyl-CoA + reduced [electron-transfer flavoprotein]. It catalyses the reaction (2S)-2-methylbutanoyl-CoA + oxidized [electron-transfer flavoprotein] + H(+) = (2E)-2-methylbut-2-enoyl-CoA + reduced [electron-transfer flavoprotein]. The catalysed reaction is (2R)-2-methylbutanoyl-CoA + oxidized [electron-transfer flavoprotein] + H(+) = ethylacryloyl-CoA + reduced [electron-transfer flavoprotein]. It carries out the reaction butanoyl-CoA + oxidized [electron-transfer flavoprotein] + H(+) = (2E)-butenoyl-CoA + reduced [electron-transfer flavoprotein]. The enzyme catalyses 2-methylpropanoyl-CoA + oxidized [electron-transfer flavoprotein] + H(+) = 2-methylpropenoyl-CoA + reduced [electron-transfer flavoprotein]. It catalyses the reaction hexanoyl-CoA + oxidized [electron-transfer flavoprotein] + H(+) = (2E)-hexenoyl-CoA + reduced [electron-transfer flavoprotein]. The catalysed reaction is 2-methylhexanoyl-CoA + oxidized [electron-transfer flavoprotein] + H(+) = 2-methylhexenoyl-CoA + reduced [electron-transfer flavoprotein]. It carries out the reaction valproyl-CoA + oxidized [electron-transfer flavoprotein] + H(+) = (2E)-2-propylpent-2-enoyl-CoA + reduced [electron-transfer flavoprotein]. It functions in the pathway lipid metabolism; mitochondrial fatty acid beta-oxidation. It participates in amino-acid degradation; L-isoleucine degradation. Competitively inhibited by valproyl-CoA. Short and branched chain specific acyl-CoA dehydrogenase that catalyzes the removal of one hydrogen from C-2 and C-3 of the fatty acyl-CoA thioester, resulting in the formation of trans-2-enoyl-CoA. Among the different mitochondrial acyl-CoA dehydrogenases, acts specifically on short and branched chain acyl-CoA derivatives such as (S)-2-methylbutyryl-CoA as well as short straight chain acyl-CoAs such as butyryl-CoA. Plays an important role in the metabolism of L-isoleucine by catalyzing the dehydrogenation of 2-methylbutyryl-CoA, one of the steps of the L-isoleucine catabolic pathway. Can also act on valproyl-CoA, a metabolite of valproic acid, an antiepileptic drug. This Homo sapiens (Human) protein is Short/branched chain specific acyl-CoA dehydrogenase, mitochondrial.